Here is a 341-residue protein sequence, read N- to C-terminus: 33 kDa chaperonin (341 aa).

2 disulfides stabilise this stretch: Cys245–Cys247 and Cys278–Cys281.

This sequence belongs to the HSP33 family. In terms of processing, under oxidizing conditions two disulfide bonds are formed involving the reactive cysteines. Under reducing conditions zinc is bound to the reactive cysteines and the protein is inactive.

The protein resides in the cytoplasm. Redox regulated molecular chaperone. Protects both thermally unfolding and oxidatively damaged proteins from irreversible aggregation. Plays an important role in the bacterial defense system toward oxidative stress. The chain is 33 kDa chaperonin from Thermus thermophilus (strain ATCC BAA-163 / DSM 7039 / HB27).